The following is a 311-amino-acid chain: Ribose-phosphate pyrophosphokinase (311 aa).

ATP-binding positions include 34 to 36 (DQE) and 93 to 94 (RQ). Mg(2+) is bound by residues H127 and D168. K191 is a catalytic residue. Residues R193, D217, and 221 to 225 (DSGGT) each bind D-ribose 5-phosphate.

Belongs to the ribose-phosphate pyrophosphokinase family. Class I subfamily. Homohexamer. It depends on Mg(2+) as a cofactor.

Its subcellular location is the cytoplasm. The enzyme catalyses D-ribose 5-phosphate + ATP = 5-phospho-alpha-D-ribose 1-diphosphate + AMP + H(+). It functions in the pathway metabolic intermediate biosynthesis; 5-phospho-alpha-D-ribose 1-diphosphate biosynthesis; 5-phospho-alpha-D-ribose 1-diphosphate from D-ribose 5-phosphate (route I): step 1/1. Its function is as follows. Involved in the biosynthesis of the central metabolite phospho-alpha-D-ribosyl-1-pyrophosphate (PRPP) via the transfer of pyrophosphoryl group from ATP to 1-hydroxyl of ribose-5-phosphate (Rib-5-P). This Mesorhizobium japonicum (strain LMG 29417 / CECT 9101 / MAFF 303099) (Mesorhizobium loti (strain MAFF 303099)) protein is Ribose-phosphate pyrophosphokinase.